We begin with the raw amino-acid sequence, 31 residues long: Alcohol dehydrogenase 1 (31 aa).

Residue cysteine 7 participates in Zn(2+) binding.

It belongs to the zinc-containing alcohol dehydrogenase family. Class-P subfamily. Homodimer. Zn(2+) serves as cofactor.

Its subcellular location is the cytoplasm. It catalyses the reaction a primary alcohol + NAD(+) = an aldehyde + NADH + H(+). The catalysed reaction is a secondary alcohol + NAD(+) = a ketone + NADH + H(+). The protein is Alcohol dehydrogenase 1 of Catharanthus roseus (Madagascar periwinkle).